Consider the following 704-residue polypeptide: Phosphatidylinositol-3,5-bisphosphate 3-phosphatase MTMR8 (704 aa).

Positions 126–500 (GWKLIDPISD…YNIQFWCGMY (375 aa)) constitute a Myotubularin phosphatase domain. Residues asparagine 250, asparagine 275, and isoleucine 276 each coordinate a 1,2-diacyl-sn-glycero-3-phospho-(1D-myo-inositol-3,5-bisphosphate). Residues asparagine 250, asparagine 275, and isoleucine 276 each contribute to the a 1,2-diacyl-sn-glycero-3-phospho-(1D-myo-inositol-3-phosphate) site. The Phosphocysteine intermediate role is filled by cysteine 338. A 1,2-diacyl-sn-glycero-3-phospho-(1D-myo-inositol-3,5-bisphosphate)-binding residues include serine 339, aspartate 340, glycine 341, tryptophan 342, aspartate 343, arginine 344, lysine 380, and arginine 384. The a 1,2-diacyl-sn-glycero-3-phospho-(1D-myo-inositol-3-phosphate) site is built by serine 339, aspartate 340, glycine 341, tryptophan 342, aspartate 343, and arginine 344. Phosphate contacts are provided by serine 339 and aspartate 340. Phosphate is bound by residues tryptophan 342, aspartate 343, and arginine 344. A 1,2-diacyl-sn-glycero-3-phospho-(1D-myo-inositol-3-phosphate) is bound at residue arginine 384. The stretch at 515-541 (ESLLEIKKQRAMLETDVHELEKKLKVR) forms a coiled coil.

The protein belongs to the protein-tyrosine phosphatase family. Non-receptor class myotubularin subfamily. Homodimer. Heterodimer with MTMR9.

Its subcellular location is the nucleus envelope. The enzyme catalyses a 1,2-diacyl-sn-glycero-3-phospho-(1D-myo-inositol-3,5-bisphosphate) + H2O = a 1,2-diacyl-sn-glycero-3-phospho-(1D-myo-inositol-5-phosphate) + phosphate. The catalysed reaction is a 1,2-diacyl-sn-glycero-3-phospho-(1D-myo-inositol-3-phosphate) + H2O = a 1,2-diacyl-sn-glycero-3-phospho-(1D-myo-inositol) + phosphate. It carries out the reaction 1,2-dioctanoyl-sn-glycero-3-phospho-(1D-myo-inositol-3,5-bisphosphate) + H2O = 1,2-dioctanoyl-sn-glycero-3-phospho-(1D-myo-inositol-5-phosphate) + phosphate. Interaction with MTMR9 increases phosphatase activity. Its function is as follows. Lipid phosphatase that specifically dephosphorylates the D-3 position of phosphatidylinositol 3-phosphate and phosphatidylinositol 3,5-bisphosphate, generating phosphatidylinositol and phosphatidylinositol 5-phosphate. In complex with MTMR9, negatively regulates autophagy. In Homo sapiens (Human), this protein is Phosphatidylinositol-3,5-bisphosphate 3-phosphatase MTMR8.